The sequence spans 412 residues: MDDQLIDRSYFTTLYKQIRLQEFLEVAHTILQDRLENGFGKTVKGVPLGCLPVELFREHFSTFRYWRSYTKERPAFINNEKVMVQHLYFTFNARSGFPTLSSGKEWVKKKVEKKDSNNPADVAIHEYQKVTFIISIRDTRVECDFKMATNTPGSEQAQQQQQQQQQQQLGDIPIKQQITSSNNSGNSQQQQPQQQQQQQQQQQQQQQQPQQQQQQQQPQQQQHLQQQHQQQVQQLQQQQLQQQQLQQQQLQQQQLQQQQLQQPQLQQMQQPQQQQQQQQPQYTPQQLMQFQQMQQAQQQQQQAQQLQQQMGSSPTHSSPTIKQEGLTGYTQIPQGGIINTNTNLNGTGGVSPNQPMPNSSPILPTNASSVVPPVVSPPLPTSNNNSNNLGTTSPQQSNSSEISHQPIVPLNP.

Disordered regions lie at residues 150-171 (NTPGSEQAQQQQQQQQQQQLGD), 177-196 (QITSSNNSGNSQQQQPQQQQ), and 302-412 (QAQQ…PLNP). The segment covering 156–168 (QAQQQQQQQQQQQ) has biased composition (low complexity). Composition is skewed to polar residues over residues 177–187 (QITSSNNSGNS) and 310–321 (MGSSPTHSSPTI). Residues 335-345 (GGIINTNTNLN) show a composition bias toward low complexity. Over residues 350–363 (VSPNQPMPNSSPIL) the composition is skewed to polar residues. Composition is skewed to low complexity over residues 364–373 (PTNASSVVPP) and 381–394 (TSNNNSNNLGTTSP).

This is an uncharacterized protein from Dictyostelium discoideum (Social amoeba).